The primary structure comprises 296 residues: Acetylglutamate kinase (296 aa).

Substrate contacts are provided by residues 68-69 (GG), arginine 90, and asparagine 195.

Belongs to the acetylglutamate kinase family. ArgB subfamily.

The protein resides in the cytoplasm. The catalysed reaction is N-acetyl-L-glutamate + ATP = N-acetyl-L-glutamyl 5-phosphate + ADP. Its pathway is amino-acid biosynthesis; L-arginine biosynthesis; N(2)-acetyl-L-ornithine from L-glutamate: step 2/4. Functionally, catalyzes the ATP-dependent phosphorylation of N-acetyl-L-glutamate. The sequence is that of Acetylglutamate kinase from Desulfotalea psychrophila (strain LSv54 / DSM 12343).